The chain runs to 80 residues: MSNVKRGGKFRRARKKVCIFCVDKAESIDYKDVAKLKKYITERGKILPRRISGTCAKHQRQLTDAIKRSRNIALLPFTTE.

Belongs to the bacterial ribosomal protein bS18 family. As to quaternary structure, part of the 30S ribosomal subunit. Forms a tight heterodimer with protein bS6.

Its function is as follows. Binds as a heterodimer with protein bS6 to the central domain of the 16S rRNA, where it helps stabilize the platform of the 30S subunit. The polypeptide is Small ribosomal subunit protein bS18 (Clostridium perfringens (strain ATCC 13124 / DSM 756 / JCM 1290 / NCIMB 6125 / NCTC 8237 / Type A)).